Consider the following 1052-residue polypeptide: Protein argonaute 14 (1052 aa).

Positions 1–39 are enriched in gly residues; that stretch reads MASRGGDGLVGGGRGPLGGRDGRGRGPAGGRGGGRGGGH. Disordered regions lie at residues 1–127 and 170–194; these read MASR…TPAV and GGRP…APPS. Over residues 40 to 49 the composition is skewed to low complexity; sequence PQQQQQQQPG. Composition is skewed to gly residues over residues 50-59 and 66-81; these read YGRGDGGGRG and GVVG…GGRG. Residues 97 to 117 show a composition bias toward low complexity; sequence VRPAMAAAPAASTPGPVAVAA. The span at 173 to 183 shows a compositional bias: pro residues; it reads PAPPAAPPAPI. Residues 394 to 510 form the PAZ domain; sequence SVVEYVKNCL…LPMEVCTIVE (117 aa). The region spanning 677–1009 is the Piwi domain; it reads LLIVILPDVN…AAFRARYYDE (333 aa).

The protein belongs to the argonaute family. Ago subfamily. In terms of tissue distribution, expressed in seeds.

In terms of biological role, probably involved in the RNA silencing pathway. May bind to short RNAs such as microRNAs (miRNAs) or short interfering RNAs (siRNAs), and represses the translation of mRNAs which are complementary to them. The chain is Protein argonaute 14 (AGO14) from Oryza sativa subsp. japonica (Rice).